A 1119-amino-acid chain; its full sequence is Isoleucine--tRNA ligase (1119 aa).

A disordered region spans residues 1-43 (MVPRRSRQRPASSCRTAKTARREMPYPLPAPDGQEPEAQPVTP). The short motif at 84–94 (PFANGLPHYGH) is the 'HIGH' region element. The 'KMSKS' region signature appears at 676–680 (KVSKS). Lys679 lines the ATP pocket.

This sequence belongs to the class-I aminoacyl-tRNA synthetase family. IleS type 2 subfamily. Monomer. Zn(2+) serves as cofactor.

The protein resides in the cytoplasm. It carries out the reaction tRNA(Ile) + L-isoleucine + ATP = L-isoleucyl-tRNA(Ile) + AMP + diphosphate. Its function is as follows. Catalyzes the attachment of isoleucine to tRNA(Ile). As IleRS can inadvertently accommodate and process structurally similar amino acids such as valine, to avoid such errors it has two additional distinct tRNA(Ile)-dependent editing activities. One activity is designated as 'pretransfer' editing and involves the hydrolysis of activated Val-AMP. The other activity is designated 'posttransfer' editing and involves deacylation of mischarged Val-tRNA(Ile). This chain is Isoleucine--tRNA ligase, found in Leifsonia xyli subsp. xyli (strain CTCB07).